The chain runs to 258 residues: Leucyl/phenylalanyl-tRNA--protein transferase (258 aa).

This sequence belongs to the L/F-transferase family.

It is found in the cytoplasm. It carries out the reaction N-terminal L-lysyl-[protein] + L-leucyl-tRNA(Leu) = N-terminal L-leucyl-L-lysyl-[protein] + tRNA(Leu) + H(+). The enzyme catalyses N-terminal L-arginyl-[protein] + L-leucyl-tRNA(Leu) = N-terminal L-leucyl-L-arginyl-[protein] + tRNA(Leu) + H(+). The catalysed reaction is L-phenylalanyl-tRNA(Phe) + an N-terminal L-alpha-aminoacyl-[protein] = an N-terminal L-phenylalanyl-L-alpha-aminoacyl-[protein] + tRNA(Phe). Functions in the N-end rule pathway of protein degradation where it conjugates Leu, Phe and, less efficiently, Met from aminoacyl-tRNAs to the N-termini of proteins containing an N-terminal arginine or lysine. In Alkalilimnicola ehrlichii (strain ATCC BAA-1101 / DSM 17681 / MLHE-1), this protein is Leucyl/phenylalanyl-tRNA--protein transferase.